The primary structure comprises 1707 residues: Mediator of DNA damage checkpoint protein 1 (1707 aa).

The disordered stretch occupies residues 1–23; sequence MESTQVIDWDAEEEEETELSSGS. The interaction with CHEK2 stretch occupies residues 1-150; that stretch reads MESTQVIDWD…PRSLLTIEKT (150 aa). The segment at 2–222 is interaction with the MRN complex; sequence ESTQVIDWDA…SSPFGLGSDT (221 aa). Thr4 bears the Phosphothreonine mark. A compositionally biased stretch (acidic residues) spans 9 to 18; sequence WDAEEEEETE. The region spanning 54-105 is the FHA domain; sequence NVVGRSPDCSVALPFPSISKQHAVIEISAWNKAPILQDCGSLNGTQIVKPPR. Residue Thr146 is modified to Phosphothreonine. A disordered region spans residues 166-328; it reads ADSEEEGDFP…EERIPVTPPV (163 aa). Ser168 and Ser176 each carry phosphoserine. The segment covering 183 to 192 has biased composition (polar residues); that stretch reads GQRNTASPSA. A phosphoserine mark is found at Ser198 and Ser220. Thr222 is modified (phosphothreonine). Positions 252 to 263 are enriched in polar residues; it reads ANGTTAGIQAQP. Residues 264–278 show a composition bias toward basic and acidic residues; that stretch reads TEHKLKDTKVKKEAG. Position 298 is a phosphoserine (Ser298). Thr300 carries the post-translational modification Phosphothreonine. At Ser313 the chain carries Phosphoserine. A Phosphothreonine modification is found at Thr315. Ser360 carries the post-translational modification Phosphoserine. Thr362 is modified (phosphothreonine). A compositionally biased stretch (basic and acidic residues) spans 369 to 378; it reads ALDVPLERNH. The interval 369 to 398 is disordered; sequence ALDVPLERNHTPMVINSDTDEEEEEEEEVS. Residue Ser385 is modified to Phosphoserine. The span at 386–397 shows a compositional bias: acidic residues; the sequence is DTDEEEEEEEEV. A Phosphothreonine modification is found at Thr387. A phosphoserine mark is found at Ser398, Ser415, Ser425, Ser438, and Ser442. 4 disordered regions span residues 417–497, 520–642, 679–699, and 718–746; these read DPGA…PGSH, PGPS…AKEC, LFPC…QTPG, and REQS…HQHL. Residues 425–439 show a composition bias toward polar residues; that stretch reads SQPQVLVEQSQSASG. The residue at position 444 (Thr444) is a Phosphothreonine. Ser461 is subject to Phosphoserine. Thr470 carries the post-translational modification Phosphothreonine. Phosphoserine occurs at positions 492, 493, 591, 593, and 595. Residues 580–595 are compositionally biased toward polar residues; sequence VSEQESTLEVRSQSGS. The segment covering 626 to 642 has biased composition (basic and acidic residues); sequence GREREAHVGRTKSAKEC. Residues 719 to 730 show a composition bias toward basic and acidic residues; it reads EQSETSELHEAH. Phosphoserine occurs at positions 735 and 750. Lys769 carries the post-translational modification N6-acetyllysine. Basic and acidic residues-rich tracts occupy residues 778-804, 812-868, and 875-889; these read ADRM…RDVI, TKDR…REWE, and TPDR…HDQK. Disordered regions lie at residues 778–899 and 914–1510; these read ADRM…TLKP and IITG…QETA. Phosphoserine occurs at positions 885, 929, and 962. Residues 968–986 are compositionally biased toward low complexity; sequence STQSLLTSQSQKQSTPQPL. Ser991 carries the phosphoserine modification. 3 stretches are compositionally biased toward polar residues: residues 1026–1056, 1068–1086, and 1101–1113; these read PNTT…STRT, QPST…SQVT, and EIQS…QSVT. Thr1056 is modified (phosphothreonine). Ser1104, Ser1126, and Ser1128 each carry phosphoserine. Residues Thr1132, Thr1173, and Thr1234 each carry the phosphothreonine modification. 4 stretches are compositionally biased toward polar residues: residues 1225 to 1241, 1265 to 1281, 1295 to 1308, and 1317 to 1326; these read PLTS…TSRA, PSTS…SSQA, VPTT…TSKK, and LVTQGRTYKP. A phosphothreonine mark is found at Thr1297 and Thr1298. Ser1327 carries the phosphoserine modification. Residues 1343–1363 show a composition bias toward polar residues; that stretch reads PSTSTDHLVTPKVTDQSLTLQ. A Phosphothreonine modification is found at Thr1352. Ser1359 carries the post-translational modification Phosphoserine. Residues 1364–1376 are compositionally biased toward low complexity; that stretch reads SSPLSASPVSSTP. At Thr1375 the chain carries Phosphothreonine. Over residues 1378–1393 the composition is skewed to pro residues; sequence LKPPVPIAQPVTPEPI. Residue Lys1418 forms a Glycyl lysine isopeptide (Lys-Gly) (interchain with G-Cter in SUMO2) linkage. Low complexity predominate over residues 1421–1441; it reads SALSEPEPQSSASQSSGASEA. Residues Ser1435, Ser1436, Ser1439, and Ser1443 each carry the phosphoserine modification. Basic and acidic residues predominate over residues 1459 to 1473; it reads VIKEEPVETEVKEEP. A Glycyl lysine isopeptide (Lys-Gly) (interchain with G-Cter in SUMO1); alternate cross-link involves residue Lys1461. A Glycyl lysine isopeptide (Lys-Gly) (interchain with G-Cter in SUMO2); alternate cross-link involves residue Lys1461. Thr1480 bears the Phosphothreonine mark. Residues 1481 to 1493 are compositionally biased toward basic and acidic residues; that stretch reads PEKRKRDHAEEVT. Residue Lys1496 is modified to N6-acetyllysine. BRCT domains lie at 1510–1588 and 1609–1700; these read APKV…DYLV and RERR…FVLS.

As to quaternary structure, homodimer. Interacts with H2AX, which requires phosphorylation of H2AX on 'Ser-139'. Interacts with the MRN complex, composed of MRE11, RAD50, and NBN. Interacts with CHEK2, which requires ATM-mediated phosphorylation of 'Thr-68' within the FHA domain of CHEK2. Interacts constitutively with the BRCA1-BARD1 complex, SMC1A and TP53BP1. Interacts with ATM and FANCD2, and these interactions are reduced upon DNA damage. Also interacts with the PRKDC complex, composed of XRCC6/KU70, XRCC5/KU80 and PRKDC/XRCC7. This interaction may be required for PRKDC autophosphorylation, which is essential for DNA double strand break (DSB) repair. When phosphorylated by ATM, interacts with RNF8 (via FHA domain). Interacts with CEP164. When phosphorylated, interacts with APTX (via FHA-like domain). Interacts (when phosphorylated) with TOPBP1; promoting TOPBP1 localization to DNA damage sites during mitosis. Interacts (when phosphorylated) with NBN; promoting NBN and MRN complex localization to DNA damage sites. In terms of processing, phosphorylated upon exposure to ionizing radiation (IR), ultraviolet radiation (UV), and hydroxyurea (HU). Phosphorylation in response to IR requires ATM, NBN, and possibly CHEK2. Also phosphorylated during the G2/M phase of the cell cycle and during activation of the mitotic spindle checkpoint. Phosphorylation at Thr-4 by ATM stabilizes and enhances homodimerization via the FHA domain. Phosphorylated at Ser-168 and Ser-198 by CK2 in response to DNA damage during mitosis, promoting interaction with TOPBP1. Phosphorylated by CK2 in response to DNA damage, promoting interaction with NBN and recruitment of the MRN complex to DNA damage sites. Sumoylation at Lys-1461 by PIAS4 following DNA damage promotes ubiquitin-mediated degradation. Post-translationally, ubiquitinated by RNF4, leading to proteasomal degradation; undergoes 'Lys-48'-linked polyubiquitination.

The protein resides in the nucleus. It is found in the chromosome. Histone reader protein required for checkpoint-mediated cell cycle arrest in response to DNA damage within both the S phase and G2/M phases of the cell cycle. Specifically recognizes and binds histone H2AX phosphorylated at 'Ser-139', a marker of DNA damage, serving as a scaffold for the recruitment of DNA repair and signal transduction proteins to discrete foci of DNA damage sites. Also required for downstream events subsequent to the recruitment of these proteins. These include phosphorylation and activation of the ATM, CHEK1 and CHEK2 kinases, and stabilization of TP53/p53 and apoptosis. ATM and CHEK2 may also be activated independently by a parallel pathway mediated by TP53BP1. Required for chromosomal stability during mitosis by promoting recruitment of TOPBP1 to DNA double strand breaks (DSBs): TOPBP1 forms filamentous assemblies that bridge MDC1 and tether broken chromosomes during mitosis. Required for the repair of DSBs via homologous recombination by promoting recruitment of NBN component of the MRN complex to DSBs. The chain is Mediator of DNA damage checkpoint protein 1 (Mdc1) from Mus musculus (Mouse).